The chain runs to 93 residues: MSLKEVITSLKNDFHSINKEIDSMKENNEKQEDKIFQEIKKLKLEMELLRKDNLSFKTTIQSLSDSINSLSSVESTYDSDLYYDDDEYSTIYL.

The stretch at 2–58 (SLKEVITSLKNDFHSINKEIDSMKENNEKQEDKIFQEIKKLKLEMELLRKDNLSFKT) forms a coiled coil.

This sequence belongs to the UPF0521 family.

The sequence is that of UPF0521 protein A from Dictyostelium discoideum (Social amoeba).